Here is a 152-residue protein sequence, read N- to C-terminus: Large ribosomal subunit protein bL9 (152 aa).

The protein belongs to the bacterial ribosomal protein bL9 family.

In terms of biological role, binds to the 23S rRNA. This Synechococcus sp. (strain CC9605) protein is Large ribosomal subunit protein bL9.